Reading from the N-terminus, the 271-residue chain is Magnesium dechelatase SGR2, chloroplastic (271 aa).

A chloroplast-targeting transit peptide spans 1–54; that stretch reads MCSLATNLLLPSKMKPVFPEKLSTSSLCVTTRRSKMKNRSIVPVARLFGPAIFE.

The protein belongs to the staygreen family. In terms of assembly, interacts with the light harvesting complex II (LHCII). Interacts with the chlorophyll catabolic enzyme (CCE) RCCR.

It is found in the plastid. The protein localises to the chloroplast thylakoid membrane. The enzyme catalyses chlorophyll a + 2 H(+) = pheophytin a + Mg(2+). Functionally, magnesium chelatase involved in chlorophyll a degradation in the chlorophyll-protein complexes of photosystem I (PSI) and photosystem II (PSII). Contributes to the degradation of PSI and PSII in the thylakoid membranes. Required to trigger chlorophyll degradation during natural and dark-induced leaf senescence. Mediates chlorophyll degradation during embryo degreening. Recombinant SGR2 possesses high dechelating activity against chlorophyll a, very low activity against chlorophyllide a, and no activity against chlorophyll b. This is Magnesium dechelatase SGR2, chloroplastic from Arabidopsis thaliana (Mouse-ear cress).